A 616-amino-acid polypeptide reads, in one-letter code: Tumor necrosis factor receptor superfamily member 11A (616 aa).

The N-terminal stretch at 1–29 (MAPRARRRRPLFALLLLCALLARLQVALQ) is a signal peptide. Over 30-212 (IAPPCTSEKH…PPNEPHVYLP (183 aa)) the chain is Extracellular. 9 disulfide bridges follow: Cys34-Cys46, Cys47-Cys60, Cys50-Cys68, Cys71-Cys86, Cys92-Cys112, Cys114-Cys127, Cys124-Cys126, Cys133-Cys151, and Cys154-Cys169. TNFR-Cys repeat units follow at residues 34-68 (CTSE…DSVC), 71-112 (CGPD…PRRC), 114-151 (CTAG…DTVC), and 154-194 (CLAG…DAVC). Asn105 carries an N-linked (GlcNAc...) asparagine glycan. Na(+) contacts are provided by Cys133, Ala134, and Ser160. Residue Asn174 is glycosylated (N-linked (GlcNAc...) asparagine). Residues Cys175 and Cys194 are joined by a disulfide bond. The helical transmembrane segment at 213 to 233 (GLIILLLFASVALVAAIIFGV) threads the bilayer. Residues 234-616 (CYRKKGKALT…PVQEQGGAKA (383 aa)) lie on the Cytoplasmic side of the membrane. The segment at 468–536 (PLPQCAYGMG…GNSNSTFISS (69 aa)) is disordered. A compositionally biased stretch (basic and acidic residues) spans 483–493 (EASRTEARDQP). Positions 499 to 508 (GRLPSSARAG) are enriched in low complexity. The span at 524–536 (NVTGNSNSTFISS) shows a compositional bias: polar residues. The required for interaction with EEIG1 and osteoclast differentiation stretch occupies residues 544-549 (GDIIVV). A disordered region spans residues 556 to 616 (QEGAAAAAEP…PVQEQGGAKA (61 aa)). The segment covering 570–580 (VQEETLARRDS) has biased composition (basic and acidic residues). The residue at position 580 (Ser580) is a Phosphoserine.

Binds to the clefts between the subunits of the TNFSF11 ligand trimer to form a heterohexamer. Part of a complex composed of EEIG1, TNFRSF11A/RANK, PLCG2, GAB2, TEC and BTK; complex formation increases in the presence of TNFSF11/RANKL. Interacts with TRAF1, TRAF2, TRAF3, TRAF5 and TRAF6. Interacts (via cytoplasmic domain) with GAB2. Interacts (via cytoplasmic domain); with EEIG1 (via N-terminus); when in the presence of TNFSF11/RANKL. Ubiquitous expression with high levels in skeletal muscle, thymus, liver, colon, small intestine and adrenal gland.

The protein resides in the cell membrane. The protein localises to the membrane raft. Its function is as follows. Receptor for TNFSF11/RANKL/TRANCE/OPGL; essential for RANKL-mediated osteoclastogenesis. Its interaction with EEIG1 promotes osteoclastogenesis via facilitating the transcription of NFATC1 and activation of PLCG2. Involved in the regulation of interactions between T-cells and dendritic cells. This chain is Tumor necrosis factor receptor superfamily member 11A (TNFRSF11A), found in Homo sapiens (Human).